Consider the following 533-residue polypeptide: WD repeat-containing protein PAC11 (533 aa).

A compositionally biased stretch (basic and acidic residues) spans M1–E19. The disordered stretch occupies residues M1–H36. 2 WD repeats span residues F380–L422 and N432–G475.

In terms of assembly, interacts with NUM1, when DYN1 is present.

It is found in the cytoplasm. The protein localises to the cytoskeleton. Required for viability in the absence of the kinesin-related CIN8 mitotic motor. May be a dynein intermediate chain. In Saccharomyces cerevisiae (strain ATCC 204508 / S288c) (Baker's yeast), this protein is WD repeat-containing protein PAC11 (PAC11).